Reading from the N-terminus, the 163-residue chain is Photosystem II extrinsic protein V (163 aa).

Positions 1-26 (MFRRLIGVVVATVLLSFQLLVGSATA) are cleaved as a signal peptide. 4 residues coordinate heme c: cysteine 63, cysteine 66, histidine 67, and histidine 118.

The protein belongs to the cytochrome c family. PsbV subfamily. PSII is composed of 1 copy each of membrane proteins PsbA, PsbB, PsbC, PsbD, PsbE, PsbF, PsbH, PsbI, PsbJ, PsbK, PsbL, PsbM, PsbT, PsbX, PsbY, PsbZ, Psb30/Ycf12, peripheral proteins PsbO, CyanoQ (PsbQ), PsbU, PsbV and a large number of cofactors. It forms dimeric complexes. Heme c serves as cofactor.

It is found in the cellular thylakoid membrane. Functionally, one of the extrinsic, lumenal subunits of photosystem II (PSII). PSII is a light-driven water plastoquinone oxidoreductase, using light energy to abstract electrons from H(2)O, generating a proton gradient subsequently used for ATP formation. The extrinsic proteins stabilize the structure of photosystem II oxygen-evolving complex (OEC), the ion environment of oxygen evolution and protect the OEC against heat-induced inactivation. Low-potential cytochrome c that plays a role in the OEC of PSII. This Nostoc punctiforme (strain ATCC 29133 / PCC 73102) protein is Photosystem II extrinsic protein V.